A 213-amino-acid chain; its full sequence is Cytochrome c biogenesis ATP-binding export protein CcmA (213 aa).

The ABC transporter domain maps to 8–213 (LQATALTCER…RDIDLGQWAA (206 aa)). 40–47 (GPNGSGKT) serves as a coordination point for ATP.

Belongs to the ABC transporter superfamily. CcmA exporter (TC 3.A.1.107) family. The complex is composed of two ATP-binding proteins (CcmA) and two transmembrane proteins (CcmB).

Its subcellular location is the cell inner membrane. It catalyses the reaction heme b(in) + ATP + H2O = heme b(out) + ADP + phosphate + H(+). Part of the ABC transporter complex CcmAB involved in the biogenesis of c-type cytochromes; once thought to export heme, this seems not to be the case, but its exact role is uncertain. Responsible for energy coupling to the transport system. The sequence is that of Cytochrome c biogenesis ATP-binding export protein CcmA from Pseudomonas savastanoi pv. phaseolicola (strain 1448A / Race 6) (Pseudomonas syringae pv. phaseolicola (strain 1448A / Race 6)).